Consider the following 126-residue polypeptide: 5-carboxymethyl-2-hydroxymuconate Delta-isomerase (126 aa).

The active-site Proton acceptor; via imino nitrogen is proline 2.

Homotrimer.

The enzyme catalyses (2E,4Z)-5-hydroxypenta-2,4-diene-1,2,5-tricarboxylate = (3E,5R)-5-carboxy-2-oxohept-3-enedioate. It participates in aromatic compound metabolism; 4-hydroxyphenylacetate degradation; pyruvate and succinate semialdehyde from 4-hydroxyphenylacetate: step 4/7. Transforms 5-carboxymethyl-2-hydroxy-muconic acid (CHM) into 5-oxo-pent-3-ene-1,2,5-tricarboxylic acid (OPET). The sequence is that of 5-carboxymethyl-2-hydroxymuconate Delta-isomerase (hpcD) from Escherichia coli.